A 559-amino-acid chain; its full sequence is Probable inorganic carbon transporter subunit DabB1 (559 aa).

A run of 13 helical transmembrane segments spans residues 4–24 (LQWL…LFAA), 33–53 (LSVA…VAYI), 76–96 (LSSI…VYSI), 106–126 (PRFF…VAAG), 173–193 (LVLA…PTLF), 202–222 (ATIM…LSAF), 240–260 (GPTP…GFII), 273–293 (VLHM…VLML), 310–330 (MGFM…FHLI), 375–395 (LPWL…LVIA), 408–428 (GAIV…FATH), 440–460 (MMIL…GHAF), and 487–507 (GLVF…YLAS).

This sequence belongs to the inorganic carbon transporter (TC 9.A.2) DabB family. In terms of assembly, forms a complex with DabA1.

It is found in the cell inner membrane. Its function is as follows. Part of an energy-coupled inorganic carbon pump. This chain is Probable inorganic carbon transporter subunit DabB1, found in Halothiobacillus neapolitanus (strain ATCC 23641 / c2) (Thiobacillus neapolitanus).